The primary structure comprises 254 residues: 5'/3'-nucleotidase SurE (254 aa).

Residues Asp9, Asp10, Ser40, and Asn93 each contribute to the a divalent metal cation site.

The protein belongs to the SurE nucleotidase family. A divalent metal cation is required as a cofactor.

It is found in the cytoplasm. The enzyme catalyses a ribonucleoside 5'-phosphate + H2O = a ribonucleoside + phosphate. It carries out the reaction a ribonucleoside 3'-phosphate + H2O = a ribonucleoside + phosphate. It catalyses the reaction [phosphate](n) + H2O = [phosphate](n-1) + phosphate + H(+). Nucleotidase with a broad substrate specificity as it can dephosphorylate various ribo- and deoxyribonucleoside 5'-monophosphates and ribonucleoside 3'-monophosphates with highest affinity to 3'-AMP. Also hydrolyzes polyphosphate (exopolyphosphatase activity) with the preference for short-chain-length substrates (P20-25). Might be involved in the regulation of dNTP and NTP pools, and in the turnover of 3'-mononucleotides produced by numerous intracellular RNases (T1, T2, and F) during the degradation of various RNAs. This Yersinia pseudotuberculosis serotype O:1b (strain IP 31758) protein is 5'/3'-nucleotidase SurE.